Consider the following 613-residue polypeptide: Potassium voltage-gated channel subfamily A member 5 (613 aa).

The interval 1–108 (MEIALVPLEN…EGDPGLGTVE (108 aa)) is disordered. A tetramerization domain region spans residues 1-211 (MEIALVPLEN…FYQLGDEAME (211 aa)). Residues 1–247 (MEIALVPLEN…LIFEYPESSG (247 aa)) are Cytoplasmic-facing. A compositionally biased stretch (basic and acidic residues) spans 45–62 (GPKEPAPKGRGAQRDADS). A run of 2 repeats spans residues 61–71 (DSGVRPLPPLP) and 72–82 (DPGVRPLPPLP). Residues 61–82 (DSGVRPLPPLPDPGVRPLPPLP) form a 2 X 11 AA tandem repeat of D-[SP]-G-V-R-P-L-P-P-L-P region. Pro residues predominate over residues 66–83 (PLPPLPDPGVRPLPPLPE). A compositionally biased stretch (basic and acidic residues) spans 84–93 (ELPRPRRPPP). Residue K221 forms a Glycyl lysine isopeptide (Lys-Gly) (interchain with G-Cter in SUMO) linkage. A helical membrane pass occupies residues 248 to 269 (SARAIAIVSVLVILISIITFCL). Residues 270–323 (ETLPEFRDERELLRHPPAPHQPPAPAPGANGSGVMAPPSGPTVAPLLPRTLADP) lie on the Extracellular side of the membrane. Residues 282 to 304 (LRHPPAPHQPPAPAPGANGSGVM) form a disordered region. Pro residues predominate over residues 285-295 (PPAPHQPPAPA). The chain crosses the membrane as a helical span at residues 324–345 (FFIVETTCVIWFTFELLVRFFA). Residue C346 is the site of S-palmitoyl cysteine attachment. At 346-356 (CPSKAGFSRNI) the chain is on the cytoplasmic side. A helical membrane pass occupies residues 357-377 (MNIIDVVAIFPYFITLGTELA). The Extracellular segment spans residues 378 to 395 (EQQPGGGGGGQNGQQAMS). The chain crosses the membrane as a helical; Voltage-sensor span at residues 396–416 (LAILRVIRLVRVFRIFKLSRH). At 417 to 431 (SKGLQILGKTLQASM) the chain is on the cytoplasmic side. Residues 418 to 431 (KGLQILGKTLQASM) are S4-S5 linker. The helical transmembrane segment at 432 to 453 (RELGLLIFFLFIGVILFSSAVY) threads the bilayer. Over 454–467 (FAEADNQGTHFSSI) the chain is Extracellular. An intramembrane region (helical) is located at residues 468–479 (PDAFWWAVVTMT). Residues 480–485 (TVGYGD) carry the Selectivity filter motif. The stretch at 480–487 (TVGYGDMR) is an intramembrane region. Residues 488–494 (PITVGGK) lie on the Extracellular side of the membrane. Residues 495-523 (IVGSLCAIAGVLTIALPVPVIVSNFNYFY) form a helical membrane-spanning segment. Topologically, residues 524 to 613 (HRETDHEEPA…CLDTSRETDL (90 aa)) are cytoplasmic. The tract at residues 532–559 (PAVLKEEQGTQSQGPGLDRGVQRKVSGS) is disordered. K536 participates in a covalent cross-link: Glycyl lysine isopeptide (Lys-Gly) (interchain with G-Cter in SUMO). S557 carries the post-translational modification Phosphoserine; by PKA. The short motif at 611-613 (TDL) is the PDZ-binding element.

It belongs to the potassium channel family. A (Shaker) (TC 1.A.1.2) subfamily. Kv1.5/KCNA5 sub-subfamily. In terms of assembly, homotetramer and heterotetramer of potassium channel proteins. Interacts with DLG1, which enhances channel currents. Forms a ternary complex with DLG1 and CAV3. Interacts with KCNAB1. Interacts with UBE2I. Interacts with XIRP2; the interaction is required for normal action potential configuration in the heart. In terms of processing, glycosylated. Sumoylated on Lys-221, and Lys-536, preferentially with SUMO3. Sumoylation regulates the voltage sensitivity of the channel. As to expression, pancreatic islets and insulinoma.

It localises to the cell membrane. The enzyme catalyses K(+)(in) = K(+)(out). With respect to regulation, inhibited by 4-aminopyridine, nicotine, bepridil, correolide, and endothelin-1. Its function is as follows. Voltage-gated potassium channel that mediates transmembrane potassium transport in excitable membranes. Forms tetrameric potassium-selective channels through which potassium ions pass in accordance with their electrochemical gradient. The channel alternates between opened and closed conformations in response to the voltage difference across the membrane. Can form functional homotetrameric channels and heterotetrameric channels that contain variable proportions of KCNA1, KCNA2, KCNA4, KCNA5, and possibly other family members as well; channel properties depend on the type of alpha subunits that are part of the channel. Channel properties are modulated by cytoplasmic beta subunits that regulate the subcellular location of the alpha subunits and promote rapid inactivation. Homotetrameric channels display rapid activation and slow inactivation. Required for normal electrical conduction including formation of the infranodal ventricular conduction system and normal action potential configuration, as a result of its interaction with XIRP2. May play a role in regulating the secretion of insulin in normal pancreatic islets. Functionally, exhibits a faster depolarization rate, reduced voltage-dependent recovery from inactivation and an excessive cumulative inactivation. This Homo sapiens (Human) protein is Potassium voltage-gated channel subfamily A member 5 (KCNA5).